Here is a 494-residue protein sequence, read N- to C-terminus: Alpha-amylase-related protein (494 aa).

The first 20 residues, 1-20, serve as a signal peptide directing secretion; sequence MIKFALALTLCLAGASLSLA. The residue at position 21 (Gln21) is a Pyrrolidone carboxylic acid. Cys48 and Cys104 are joined by a disulfide. Ca(2+) is bound by residues Asn118, Gln169, and Asp178. Cys157 and Cys171 form a disulfide bridge. A chloride-binding site is contributed by Arg206. The active-site Nucleophile is the Asp208. His212 contributes to the Ca(2+) binding site. Residue Glu245 is the Proton donor of the active site. Residues Asn308 and Arg343 each coordinate chloride. 3 disulfides stabilise this stretch: Cys376–Cys382, Cys418–Cys441, and Cys448–Cys460.

This sequence belongs to the glycosyl hydrolase 13 family. In terms of assembly, monomer. The cofactor is Ca(2+). It depends on chloride as a cofactor.

Its subcellular location is the secreted. It catalyses the reaction Endohydrolysis of (1-&gt;4)-alpha-D-glucosidic linkages in polysaccharides containing three or more (1-&gt;4)-alpha-linked D-glucose units.. The chain is Alpha-amylase-related protein (Amyrel) from Drosophila auraria (Fruit fly).